The sequence spans 620 residues: MTTELLDRILSPADLRQLDRRELKRLADELRGFVLESVSRTGGHLSSNLGTVELSLALHYVFDTPHDRIVWDVGHQSYPHKILTGRREGMAHLRQQGGISGFPKRSESEYDAFGTAHSSTSISAALGMAVASRNAGVQRQHIAVIGDGAMSAGMAFEAMNNAGVTPNINLLVVLNDNDMSISPPVGALNRYLARLMSGQFYAAAKNVGRAVLQHVPPVLELARRLEEHAKGMVTPATLFEEFGFNYVGPIDGHDLDALVPTLQNLRALPGLQFLHVVTRKGQGYKLAEADPVLYHGPGKFDPAVGIQQAKAPARKTFTQVFGQWLCDMAERDERLVGITPAMREGSGLVEFEQRFPQRYFDVGIAEQHAVTFAAGLACEGQKPVVAIYSTFLQRGYDQLVHDVALQNLDVTFALDRAGLVGADGATHAGNYDIAFLRCVPNMVVAAPSDESEARLLLSTCYEHPGPASVRYPRGAGCGAAVGEGLATVPLGKGLVRREGRRIAILGFGTLVQAALGAAGQIDAMVADMRFVKPLDRELVLELAARHDALVTVEEAAIMGGAGSAVLETLAEAGVTLPVLQLGLPDAFIDHGDQAALLAGLGLDAAGIERAIRARFGALLA.

Thiamine diphosphate is bound by residues histidine 75 and 116 to 118 (AHS). Aspartate 147 lines the Mg(2+) pocket. Residues 148–149 (GA), asparagine 177, tyrosine 284, and glutamate 366 contribute to the thiamine diphosphate site. Asparagine 177 contacts Mg(2+).

Belongs to the transketolase family. DXPS subfamily. Homodimer. Requires Mg(2+) as cofactor. It depends on thiamine diphosphate as a cofactor.

It catalyses the reaction D-glyceraldehyde 3-phosphate + pyruvate + H(+) = 1-deoxy-D-xylulose 5-phosphate + CO2. It participates in metabolic intermediate biosynthesis; 1-deoxy-D-xylulose 5-phosphate biosynthesis; 1-deoxy-D-xylulose 5-phosphate from D-glyceraldehyde 3-phosphate and pyruvate: step 1/1. Catalyzes the acyloin condensation reaction between C atoms 2 and 3 of pyruvate and glyceraldehyde 3-phosphate to yield 1-deoxy-D-xylulose-5-phosphate (DXP). The polypeptide is 1-deoxy-D-xylulose-5-phosphate synthase (Bordetella pertussis (strain Tohama I / ATCC BAA-589 / NCTC 13251)).